The sequence spans 126 residues: Phosphoribosyl-AMP cyclohydrolase (126 aa).

Aspartate 74 lines the Mg(2+) pocket. Cysteine 75 provides a ligand contact to Zn(2+). 2 residues coordinate Mg(2+): aspartate 76 and aspartate 78. Residues cysteine 92 and cysteine 99 each coordinate Zn(2+).

Belongs to the PRA-CH family. As to quaternary structure, homodimer. Mg(2+) serves as cofactor. The cofactor is Zn(2+).

The protein localises to the cytoplasm. The catalysed reaction is 1-(5-phospho-beta-D-ribosyl)-5'-AMP + H2O = 1-(5-phospho-beta-D-ribosyl)-5-[(5-phospho-beta-D-ribosylamino)methylideneamino]imidazole-4-carboxamide. The protein operates within amino-acid biosynthesis; L-histidine biosynthesis; L-histidine from 5-phospho-alpha-D-ribose 1-diphosphate: step 3/9. Catalyzes the hydrolysis of the adenine ring of phosphoribosyl-AMP. The protein is Phosphoribosyl-AMP cyclohydrolase of Geotalea daltonii (strain DSM 22248 / JCM 15807 / FRC-32) (Geobacter daltonii).